Reading from the N-terminus, the 242-residue chain is Galectin-3 (242 aa).

A disordered region spans residues 1–35 (MADGFSLNDALSGSGHPPNQGWPGPWGNQPAGPGG). The residue at position 2 (A2) is an N-acetylalanine. S6 is subject to Phosphoserine; by CK1. Position 12 is a phosphoserine (S12). Residues 17 to 31 (PPNQGWPGPWGNQPA) show a composition bias toward low complexity. A run of 4 repeats spans residues 35–43 (GYPGAAYPG), 44–52 (AYPGHAPGA), 53–61 (YPGQAPPGP), and 62–70 (YPGPGAHGA). Positions 35 to 98 (GYPGAAYPGA…GAGAYPGASP (64 aa)) are 7 X 9 AA tandem repeats of Y-P-G-X(3)-P-[GS]-A. Positions 55 to 93 (GQAPPGPYPGPGAHGAYPGQPGGPGAYPSPGQPSGAGAY) are disordered. One copy of the 5; approximate repeat lies at 71–80 (YPGQPGGPGA). A compositionally biased stretch (low complexity) spans 80-93 (AYPSPGQPSGAGAY). Residues 81–92 (YPSPGQPSGAGA) form a 6; approximate repeat. The 7; truncated repeat unit spans residues 93-98 (YPGASP). One can recognise a Galectin domain in the interval 110–240 (YDLPLPGGVM…DIQLTSASHA (131 aa)). 173–181 (WGREERQTT) provides a ligand contact to a beta-D-galactoside. The Nuclear export signal signature appears at 218–233 (RNLKEINKLGISGDIQ).

Probably forms homo- or heterodimers. Interacts with DMBT1. Interacts with CD6 and ALCAM. Forms a complex with the ITGA3, ITGB1 and CSPG4. Interacts with LGALS3BP, LYPD3, ZFTRAF1 and UACA. Interacts with TRIM16; this interaction mediates autophagy of damage endomembranes. Interacts with cargo receptor TMED10; the interaction mediates the translocation from the cytoplasm into the ERGIC (endoplasmic reticulum-Golgi intermediate compartment) and thereby secretion. Interacts with and inhibits by binding NCR3/NKp30.

The protein localises to the cytoplasm. It is found in the nucleus. The protein resides in the secreted. In terms of biological role, galactose-specific lectin which binds IgE. May mediate with the alpha-3, beta-1 integrin the stimulation by CSPG4 of endothelial cells migration. Together with DMBT1, required for terminal differentiation of columnar epithelial cells during early embryogenesis. In the nucleus: acts as a pre-mRNA splicing factor. Involved in acute inflammatory responses including neutrophil activation and adhesion, chemoattraction of monocytes macrophages, opsonization of apoptotic neutrophils, and activation of mast cells. Together with TRIM16, coordinates the recognition of membrane damage with mobilization of the core autophagy regulators ATG16L1 and BECN1 in response to damaged endomembranes. When secreted, interacts with NK cell-activating receptor NCR3/NKp30 acting as an inhibitory ligand which antagonizes NK cell attack. In Oryctolagus cuniculus (Rabbit), this protein is Galectin-3 (LGALS3).